Reading from the N-terminus, the 174-residue chain is NADH-ubiquinone oxidoreductase chain 6 (174 aa).

5 helical membrane-spanning segments follow: residues 1–21 (MTYV…GFSS), 24–44 (SPIY…MIIL), 47–67 (GGAY…MVVF), 86–106 (FEVL…VLWV), and 151–171 (WLVV…IEIT).

The protein belongs to the complex I subunit 6 family. In terms of assembly, core subunit of respiratory chain NADH dehydrogenase (Complex I) which is composed of 45 different subunits.

It localises to the mitochondrion inner membrane. It carries out the reaction a ubiquinone + NADH + 5 H(+)(in) = a ubiquinol + NAD(+) + 4 H(+)(out). In terms of biological role, core subunit of the mitochondrial membrane respiratory chain NADH dehydrogenase (Complex I) which catalyzes electron transfer from NADH through the respiratory chain, using ubiquinone as an electron acceptor. Essential for the catalytic activity and assembly of complex I. The protein is NADH-ubiquinone oxidoreductase chain 6 (MT-ND6) of Papio hamadryas (Hamadryas baboon).